We begin with the raw amino-acid sequence, 447 residues long: Rab GDP dissociation inhibitor alpha (447 aa).

Ser427 is modified (phosphoserine).

The protein belongs to the Rab GDI family. As to quaternary structure, interacts with RHOH. Interacts with the non-phosphorylated forms of RAB1A, RAB3A, RAB5A, RAB5B, RAB5C, RAB8A, RAB8B, RAB10, RAB12, RAB35, and RAB43.

The protein resides in the cytoplasm. Its subcellular location is the golgi apparatus. The protein localises to the trans-Golgi network. Functionally, regulates the GDP/GTP exchange reaction of most Rab proteins by inhibiting the dissociation of GDP from them, and the subsequent binding of GTP to them. Promotes the dissociation of GDP-bound Rab proteins from the membrane and inhibits their activation. Promotes the dissociation of RAB1A, RAB3A, RAB5A and RAB10 from membranes. In Canis lupus familiaris (Dog), this protein is Rab GDP dissociation inhibitor alpha (GDI1).